The chain runs to 474 residues: ATP synthase subunit beta (474 aa).

An ATP-binding site is contributed by 151-158 (GGAGVGKT).

It belongs to the ATPase alpha/beta chains family. F-type ATPases have 2 components, CF(1) - the catalytic core - and CF(0) - the membrane proton channel. CF(1) has five subunits: alpha(3), beta(3), gamma(1), delta(1), epsilon(1). CF(0) has four main subunits: a(1), b(1), b'(1) and c(9-12).

Its subcellular location is the cell inner membrane. The catalysed reaction is ATP + H2O + 4 H(+)(in) = ADP + phosphate + 5 H(+)(out). Its function is as follows. Produces ATP from ADP in the presence of a proton gradient across the membrane. The catalytic sites are hosted primarily by the beta subunits. The sequence is that of ATP synthase subunit beta from Jannaschia sp. (strain CCS1).